Here is a 346-residue protein sequence, read N- to C-terminus: Growth hormone-inducible transmembrane protein (346 aa).

The N-terminal 45 residues, 1-45 (MLAARLVCLRTLPSRVFQPTFITKASPLVKNSITKNQWLLTPSRE), are a transit peptide targeting the mitochondrion. Over 46–83 (YATKTRIRTHRGKTGQELKEAALEPSLEKVFKIDQMGK) the chain is Mitochondrial matrix. Residues 84–104 (WFVAGGAAVGLGALCYYGLGM) form a helical membrane-spanning segment. At 105–126 (SNEIGAIEKAVIWPQYVKDRIH) the chain is on the mitochondrial intermembrane side. Residues 127–147 (STYMYLAGSIGLTALSALALA) traverse the membrane as a helical segment. Residues 148 to 160 (RSPALMNFMMTGS) are Mitochondrial matrix-facing. Residues 161–181 (WMTIGATFAAMIGAGMLVQSI) form a helical membrane-spanning segment. The Mitochondrial intermembrane segment spans residues 182-191 (SYEQSPGPKH). Residues 192 to 212 (LAWMLHSGVMGAVVAPLTILG) traverse the membrane as a helical segment. Topologically, residues 213-214 (GP) are mitochondrial matrix. A helical transmembrane segment spans residues 215-235 (LLLRAAWYTAGIVGGLSTVAM). Residues 236–245 (CAPSEKFLNM) are Mitochondrial intermembrane-facing. Residues 246-266 (GAPLGVGLGLVFASSLGSMFL) traverse the membrane as a helical segment. At 267 to 272 (PPTSVA) the chain is on the mitochondrial matrix side. The chain crosses the membrane as a helical span at residues 273–293 (GATLYSVAMYGGLVLFSMFLL). Residues 294–346 (YDTQKVVKRAEITPAYGAQKYDPINSMLTIYMDTLNIFMRVATMLATGSNRKK) lie on the Mitochondrial intermembrane side of the membrane.

The protein belongs to the BI1 family. As to quaternary structure, interacts with LETM1 and AFG3L2. Undergoes AFG3L2-mediated proteolytic degradation, upon hyperpolarization of mitochondria.

Its subcellular location is the mitochondrion inner membrane. Plays an important role in maintenance of mitochondrial morphology and in mediating either calcium or potassium/proton antiport. Mediates proton-dependent calcium efflux from mitochondrion. Also functions as an electroneutral mitochondrial proton/potassium exchanger. Required for the mitochondrial tubular network and cristae organization. Involved in apoptotic release of cytochrome c. Inhibits AFG3L2 proteolytic activity, stimulating respiration and stabilizing respiratory enzymes in actively respiring mitochondria. However, when mitochondria become hyperpolarized, GHITM loses its inhibitory activity toward AFG3L2 and the now active AFG3L2 turns first on GHITM and, if hyperpolarization persists, on other proteins of the mitochondria, leading to a broad remodeling of the proteome. This Rattus norvegicus (Rat) protein is Growth hormone-inducible transmembrane protein (Ghitm).